The chain runs to 403 residues: Lipid droplet-regulating VLDL assembly factor AUP1 (403 aa).

At 1 to 21 (MEQPSVESLLELRRFPRKQLS) the chain is on the cytoplasmic side. An intramembrane segment occupies 22 to 42 (LILLLLYSPLGLCLFLIRLFI). Residues 43-399 (GAHVFLVSCV…GSVGREEEEK (357 aa)) are Cytoplasmic-facing. A CUE domain is found at 286-328 (TQMQMAQHVKEVLPQVPLSAIHRDLGHTGCIDTTITNFLEGRV).

This sequence belongs to the AUP1 family.

The protein resides in the endoplasmic reticulum membrane. The protein localises to the lipid droplet. Plays a role in the translocation of terminally misfolded proteins from the endoplasmic reticulum lumen to the cytoplasm and their degradation by the proteasome. Plays a role in lipid droplet formation. Induces lipid droplet clustering. The sequence is that of Lipid droplet-regulating VLDL assembly factor AUP1 from Xenopus tropicalis (Western clawed frog).